The following is a 464-amino-acid chain: Spore coat protein SP65 (464 aa).

The N-terminal stretch at 1–17 (MKVLLLLVCLVFAYVNA) is a signal peptide. The 23-residue stretch at 21 to 43 (ACYNVVCPSNYQCRAEGDQAYCV) folds into the Follistatin-like 1 domain. Asn-111 carries an N-linked (GlcNAc...) asparagine glycan. Follistatin-like domains follow at residues 121–143 (VCRD…PHCV) and 151–173 (LCRV…PTCL). An N-linked (GlcNAc...) asparagine glycan is attached at Asn-247. The tract at residues 250–320 (STTGATTGAT…STTGAATTAP (71 aa)) is disordered.

In terms of assembly, binds to the C-terminal region of pspB.

It is found in the spore wall. In terms of biological role, forms a triad with cellulose and pspB that is essential for spore outer layer formation. In Dictyostelium discoideum (Social amoeba), this protein is Spore coat protein SP65 (cotE).